A 55-amino-acid chain; its full sequence is Large ribosomal subunit protein bL33 (55 aa).

The protein belongs to the bacterial ribosomal protein bL33 family.

The sequence is that of Large ribosomal subunit protein bL33 from Rhodopseudomonas palustris (strain BisB5).